The following is a 26-amino-acid chain: DEAD-box ATP-dependent RNA helicase 1 (26 aa).

Positions 1 to 10 (RELLMGIFEK) match the Q motif motif. 11–16 (NGTGKT) provides a ligand contact to ATP. Residues 11–26 (NGTGKTAAFVIPLLQK) enclose the Helicase ATP-binding domain.

Belongs to the DEAD box helicase family. DDX6/DHH1 subfamily.

It localises to the cytoplasm. The protein localises to the P-body. It carries out the reaction ATP + H2O = ADP + phosphate + H(+). Functionally, ATP-dependent RNA helicase involved in mRNA turnover, and more specifically in mRNA decapping. This is DEAD-box ATP-dependent RNA helicase 1 from Catharanthus roseus (Madagascar periwinkle).